Here is a 523-residue protein sequence, read N- to C-terminus: GMP synthase [glutamine-hydrolyzing] (523 aa).

One can recognise a Glutamine amidotransferase type-1 domain in the interval 8 to 205 (KILILDFGSQ…VVNICGCETK (198 aa)). The Nucleophile role is filled by C85. Catalysis depends on residues H179 and E181. A GMPS ATP-PPase domain is found at 206-398 (WTAENIIEDA…LGLPAEMINR (193 aa)). 233–239 (SGGVDSS) lines the ATP pocket.

As to quaternary structure, homodimer.

It catalyses the reaction XMP + L-glutamine + ATP + H2O = GMP + L-glutamate + AMP + diphosphate + 2 H(+). It participates in purine metabolism; GMP biosynthesis; GMP from XMP (L-Gln route): step 1/1. In terms of biological role, catalyzes the synthesis of GMP from XMP. This is GMP synthase [glutamine-hydrolyzing] from Haemophilus influenzae (strain PittEE).